Consider the following 396-residue polypeptide: Penicillopepsin-1 (396 aa).

A signal peptide spans 1-20 (MVVFSKVTASLACFSAVVSA). A propeptide spans 21–72 (AAVPVKSPRQGFSVNQVQKTVTGTRTVNLPGVYANALAKYGATVPANVHAAA) (activation peptide). The Peptidase A1 domain maps to 88 to 393 (YLTPVKIGES…DAEGPRLGFA (306 aa)). Active-site residues include aspartate 104 and aspartate 285. Residue asparagine 311 is glycosylated (N-linked (GlcNAc...) asparagine). Cysteine 321 and cysteine 356 are oxidised to a cystine.

Belongs to the peptidase A1 family. Monomer.

It localises to the secreted. It carries out the reaction Hydrolysis of proteins with broad specificity similar to that of pepsin A, preferring hydrophobic residues at P1 and P1', but also cleaving 20-Gly-|-Glu-21 in the B chain of insulin. Clots milk, and activates trypsinogen.. Secreted aspartic endopeptidase that allows assimilation of proteinaceous substrates. The scissile peptide bond is attacked by a nucleophilic water molecule activated by two aspartic residues in the active site. Shows a broad primary substrate specificity. Favors hydrophobic residues at the P1 and P1' positions, but can also activate trypsinogen and hydrolyze the B chain of insulin between positions 'Gly-20' and 'Glu-21'. This is Penicillopepsin-1 (pepA) from Penicillium rubens (strain ATCC 28089 / DSM 1075 / NRRL 1951 / Wisconsin 54-1255) (Penicillium chrysogenum).